A 962-amino-acid polypeptide reads, in one-letter code: Leucine--tRNA ligase (962 aa).

Residues 40–51 (PYPSGAGLHVGH) carry the 'HIGH' region motif. The interval 548-570 (SRKLSGQHDEPNSNVTPSAVEGS) is disordered. The 'KMSKS' region signature appears at 737 to 741 (KMSKS). ATP is bound at residue Lys740.

The protein belongs to the class-I aminoacyl-tRNA synthetase family.

It localises to the cytoplasm. It catalyses the reaction tRNA(Leu) + L-leucine + ATP = L-leucyl-tRNA(Leu) + AMP + diphosphate. The polypeptide is Leucine--tRNA ligase (Christiangramia forsetii (strain DSM 17595 / CGMCC 1.15422 / KT0803) (Gramella forsetii)).